Reading from the N-terminus, the 120-residue chain is Large ribosomal subunit protein uL18 (120 aa).

Belongs to the universal ribosomal protein uL18 family. As to quaternary structure, part of the 50S ribosomal subunit; part of the 5S rRNA/L5/L18/L25 subcomplex. Contacts the 5S and 23S rRNAs.

In terms of biological role, this is one of the proteins that bind and probably mediate the attachment of the 5S RNA into the large ribosomal subunit, where it forms part of the central protuberance. This Synechococcus elongatus (strain ATCC 33912 / PCC 7942 / FACHB-805) (Anacystis nidulans R2) protein is Large ribosomal subunit protein uL18.